The following is a 263-amino-acid chain: Small ribosomal subunit protein eS4 (263 aa).

One can recognise an S4 RNA-binding domain in the interval leucine 42–aspartate 104.

Belongs to the eukaryotic ribosomal protein eS4 family.

The protein is Small ribosomal subunit protein eS4 (rps4) of Ictalurus punctatus (Channel catfish).